A 224-amino-acid polypeptide reads, in one-letter code: Non-structural protein V (224 aa).

Positions 54–65 are enriched in polar residues; it reads QKNIQHPTASHQ. Disordered stretches follow at residues 54-94 and 150-172; these read QKNI…TQIP and TEFKRGAGSGCSRPDNPRGGHRR. Residues His170, Cys189, Cys193, Cys205, Cys207, Cys210, Cys214, and Cys217 each coordinate Zn(2+).

The protein belongs to the paramyxoviruses V protein family. In terms of assembly, interacts with host IFIH1/MDA5 and DHX58/LGP2. Forms with host DDB1, CUL4A, STAT1, STAT2 and STAT3 the mumps virus V-dependent complex (VDC).

It is found in the virion. It localises to the host cytoplasm. Its function is as follows. Plays an essential role in the inhibition of host immune response. Prevents the establishment of cellular antiviral state by blocking interferon-alpha/beta (IFN-alpha/beta) production and signaling pathway. Interacts with host IFIH1/MDA5 and DHX58/LGP2 to inhibit the transduction pathway involved in the activation of IFN-beta promoter, thus protecting the virus against cell antiviral state. Blocks the type I and II interferon signaling pathways by interacting with host STAT1, STAT2 and STAT3, and mediating their ubiquitination and subsequent proteasomal degradation. This Homo sapiens (Human) protein is Non-structural protein V.